The chain runs to 533 residues: D-3-phosphoglycerate dehydrogenase (533 aa).

The residue at position 2 (Ala-2) is an N-acetylalanine. The residue at position 14 (Ser-14) is a Phosphoserine. Lys-21 carries the N6-acetyllysine; alternate modification. Residue Lys-21 forms a Glycyl lysine isopeptide (Lys-Gly) (interchain with G-Cter in SUMO1); alternate linkage. Lys-21 is covalently cross-linked (Glycyl lysine isopeptide (Lys-Gly) (interchain with G-Cter in SUMO2); alternate). Residue Lys-58 is modified to N6-acetyllysine. NAD(+) contacts are provided by residues Thr-78, 155–156 (RI), Asp-175, Thr-207, 234–236 (CAR), and Asp-260. Position 78 is a phosphothreonine (Thr-78). Residue Arg-236 is part of the active site. Glu-265 is an active-site residue. His-283 functions as the Proton donor in the catalytic mechanism. 283-286 (HLGA) is a binding site for NAD(+).

It belongs to the D-isomer specific 2-hydroxyacid dehydrogenase family. In terms of assembly, homotetramer.

The enzyme catalyses (2R)-3-phosphoglycerate + NAD(+) = 3-phosphooxypyruvate + NADH + H(+). The catalysed reaction is (R)-2-hydroxyglutarate + NAD(+) = 2-oxoglutarate + NADH + H(+). It catalyses the reaction (S)-malate + NAD(+) = oxaloacetate + NADH + H(+). It functions in the pathway amino-acid biosynthesis; L-serine biosynthesis; L-serine from 3-phospho-D-glycerate: step 1/3. Catalyzes the reversible oxidation of 3-phospho-D-glycerate to 3-phosphonooxypyruvate, the first step of the phosphorylated L-serine biosynthesis pathway. Also catalyzes the reversible oxidation of 2-hydroxyglutarate to 2-oxoglutarate and the reversible oxidation of (S)-malate to oxaloacetate. This Pongo abelii (Sumatran orangutan) protein is D-3-phosphoglycerate dehydrogenase (PHGDH).